A 104-amino-acid polypeptide reads, in one-letter code: Ribonuclease P protein component 4 (104 aa).

Residues cysteine 57, cysteine 60, cysteine 83, and cysteine 86 each contribute to the Zn(2+) site.

Belongs to the eukaryotic/archaeal RNase P protein component 4 family. As to quaternary structure, consists of a catalytic RNA component and at least 4-5 protein subunits. It depends on Zn(2+) as a cofactor.

The protein localises to the cytoplasm. The enzyme catalyses Endonucleolytic cleavage of RNA, removing 5'-extranucleotides from tRNA precursor.. In terms of biological role, part of ribonuclease P, a protein complex that generates mature tRNA molecules by cleaving their 5'-ends. The sequence is that of Ribonuclease P protein component 4 from Saccharolobus islandicus (strain M.16.27) (Sulfolobus islandicus).